Consider the following 1381-residue polypeptide: DNA-directed RNA polymerase subunit beta' (1381 aa).

Zn(2+)-binding residues include Cys-70, Cys-72, Cys-85, and Cys-88. 3 residues coordinate Mg(2+): Asp-461, Asp-463, and Asp-465. Zn(2+) contacts are provided by Cys-801, Cys-875, Cys-882, and Cys-885. The disordered stretch occupies residues 1362 to 1381; that stretch reads VEIEGDENSNKKSLDMHAAN. Basic and acidic residues predominate over residues 1369–1381; that stretch reads NSNKKSLDMHAAN.

This sequence belongs to the RNA polymerase beta' chain family. In terms of assembly, the RNAP catalytic core consists of 2 alpha, 1 beta, 1 beta' and 1 omega subunit. When a sigma factor is associated with the core the holoenzyme is formed, which can initiate transcription. The cofactor is Mg(2+). Requires Zn(2+) as cofactor.

The catalysed reaction is RNA(n) + a ribonucleoside 5'-triphosphate = RNA(n+1) + diphosphate. Functionally, DNA-dependent RNA polymerase catalyzes the transcription of DNA into RNA using the four ribonucleoside triphosphates as substrates. The chain is DNA-directed RNA polymerase subunit beta' from Syntrophus aciditrophicus (strain SB).